The sequence spans 312 residues: sn-1-specific diacylglycerol lipase ABHD11 (312 aa).

A mitochondrion-targeting transit peptide spans 1–14 (MITFKSFHCSRGWH). One can recognise an AB hydrolase-1 domain in the interval 62–297 (PPLVLLHGLF…GAGHWVHADK (236 aa)). Catalysis depends on charge relay system residues S136, E232, and H291.

Belongs to the AB hydrolase superfamily. In terms of processing, phosphorylated.

It is found in the mitochondrion. The protein resides in the mitochondrion matrix. The enzyme catalyses 1-octadecanoyl-2-(5Z,8Z,11Z,14Z-eicosatetraenoyl)-sn-glycerol + H2O = 2-(5Z,8Z,11Z,14Z-eicosatetraenoyl)-glycerol + octadecanoate + H(+). The catalysed reaction is a 1,2-diacyl-sn-glycerol + H2O = a 2-acylglycerol + a fatty acid + H(+). It catalyses the reaction a 1,3-diacyl-sn-glycerol + H2O = a 1-acyl-sn-glycerol + a fatty acid + H(+). It carries out the reaction 1-octadecanoyl-2-(9Z-octadecenoyl)-sn-glycerol + H2O = 2-(9Z-octadecenoyl)-glycerol + octadecanoate + H(+). The enzyme catalyses 1-octadecanoyl-2-(4Z,7Z,10Z,13Z,16Z,19Z-docosahexaenoyl)-sn-glycerol + H2O = 2-(4Z,7Z,10Z,13Z,16Z,19Z-docosahexaenoyl)-glycerol + octadecanoate + H(+). The catalysed reaction is 1,2-didecanoylglycerol + H2O = decanoylglycerol + decanoate + H(+). Its function is as follows. Catalyzes the hydrolysis of diacylglycerol in vitro and may function as a key regulator in lipid metabolism, namely by regulating the intracellular levels of diacylglycerol. 1,2-diacyl-sn-glycerols are the preferred substrate over 1,3-diacyl-sn-glycerols. The enzyme hydrolyzes stearate in preference to palmitate from the sn-1 position of 1,2-diacyl-sn-glycerols. This Xenopus laevis (African clawed frog) protein is sn-1-specific diacylglycerol lipase ABHD11.